Here is a 332-residue protein sequence, read N- to C-terminus: 2,3-diketo-L-gulonate reductase (332 aa).

The active-site Proton donor is His44. Residues 168-174 (ITMVDMS), 224-225 (WK), and 304-306 (GHE) contribute to the NAD(+) site.

The protein belongs to the LDH2/MDH2 oxidoreductase family. DlgD subfamily. In terms of assembly, homodimer.

It is found in the cytoplasm. The catalysed reaction is 3-dehydro-L-gulonate + NAD(+) = 2,3-dioxo-L-gulonate + NADH + H(+). It catalyses the reaction 3-dehydro-L-gulonate + NADP(+) = 2,3-dioxo-L-gulonate + NADPH + H(+). Its function is as follows. Catalyzes the reduction of 2,3-diketo-L-gulonate in the presence of NADH, to form 3-keto-L-gulonate. In Shigella boydii serotype 4 (strain Sb227), this protein is 2,3-diketo-L-gulonate reductase.